A 181-amino-acid polypeptide reads, in one-letter code: Peptidyl-tRNA hydrolase (181 aa).

Y14 contributes to the tRNA binding site. The active-site Proton acceptor is H19. Residues Y60, N62, and N108 each contribute to the tRNA site.

The protein belongs to the PTH family. In terms of assembly, monomer.

It is found in the cytoplasm. It catalyses the reaction an N-acyl-L-alpha-aminoacyl-tRNA + H2O = an N-acyl-L-amino acid + a tRNA + H(+). In terms of biological role, hydrolyzes ribosome-free peptidyl-tRNAs (with 1 or more amino acids incorporated), which drop off the ribosome during protein synthesis, or as a result of ribosome stalling. Its function is as follows. Catalyzes the release of premature peptidyl moieties from peptidyl-tRNA molecules trapped in stalled 50S ribosomal subunits, and thus maintains levels of free tRNAs and 50S ribosomes. The protein is Peptidyl-tRNA hydrolase of Metamycoplasma arthritidis (strain 158L3-1) (Mycoplasma arthritidis).